Reading from the N-terminus, the 171-residue chain is Mitochondrial import inner membrane translocase subunit Tim17-A (171 aa).

Cysteine 9 and cysteine 78 are oxidised to a cystine. 3 helical membrane-spanning segments follow: residues 17–37 (CGGAFTMGTIGGGIFQAFKGF), 63–77 (GGSFAVWGGLFSTID), and 113–133 (VGSAAMGGILLALIEGAGILL). Residues 144-171 (GPQFTEDHSQLPSSQLPSSPFGDYRQYQ) are disordered. Positions 153–163 (QLPSSQLPSSP) are enriched in low complexity.

It belongs to the Tim17/Tim22/Tim23 family. Component of the TIM23 complex at least composed of TIMM23, TIMM17 (TIMM17A or TIMM17B) and TIMM50. The complex interacts with the TIMM44 component of the PAM complex and with DNAJC15. Degraded by YMEL1 downstream of the integrated stress response (ISR).

Its subcellular location is the mitochondrion inner membrane. Essential component of the TIM23 complex, a complex that mediates the translocation of transit peptide-containing proteins across the mitochondrial inner membrane. This chain is Mitochondrial import inner membrane translocase subunit Tim17-A (Timm17a), found in Mus musculus (Mouse).